The primary structure comprises 431 residues: Adenylosuccinate synthetase (431 aa).

Residues 21-27 (GDEGKGK) and 49-51 (GHT) contribute to the GTP site. The active-site Proton acceptor is aspartate 22. The Mg(2+) site is built by aspartate 22 and glycine 49. IMP contacts are provided by residues 22–25 (DEGK), 47–50 (NAGH), threonine 138, arginine 152, asparagine 230, threonine 245, and arginine 309. The active-site Proton donor is histidine 50. 305–311 (ATTGRPR) contributes to the substrate binding site. GTP-binding positions include arginine 311, 337–339 (KLD), and 419–421 (GNG).

Belongs to the adenylosuccinate synthetase family. As to quaternary structure, homodimer. Mg(2+) serves as cofactor.

Its subcellular location is the cytoplasm. It carries out the reaction IMP + L-aspartate + GTP = N(6)-(1,2-dicarboxyethyl)-AMP + GDP + phosphate + 2 H(+). The protein operates within purine metabolism; AMP biosynthesis via de novo pathway; AMP from IMP: step 1/2. Its function is as follows. Plays an important role in the de novo pathway and in the salvage pathway of purine nucleotide biosynthesis. Catalyzes the first committed step in the biosynthesis of AMP from IMP. The polypeptide is Adenylosuccinate synthetase (Paramecium tetraurelia).